The chain runs to 999 residues: RING finger domain and kelch repeat-containing protein DDB_G0271372 (999 aa).

Residues 7–49 (CPNCLKVFNNPRQLECDHILCTRCIEGVYNPGRTPIIKCPVCD) form an RING-type zinc finger. A compositionally biased stretch (low complexity) spans 92–143 (STGSSNNNNNNNNNNNNNNNNFVINNSNNKNNGATTTTTTTTTTTNSNSNST). 2 disordered regions span residues 92–147 (STGS…KSKV) and 159–209 (ASPK…SSPP). The span at 165 to 196 (GSSQGSLTTINNQKKLTLSPQRASSTTTTSVN) shows a compositional bias: polar residues. The segment at 258 to 302 (AELSKCNDHDQKKFTIFCTDCDQLLCDECLNNNQQQHENHQLNKI) adopts a B box-type zinc-finger fold. Zn(2+)-binding residues include C263, H266, C286, and H294. A coiled-coil region spans residues 355–402 (DIDTMIENLKERKNALISQIDKEYEEQKLELKDQIETINTTIVDIQNN). 2 stretches are compositionally biased toward low complexity: residues 485 to 516 (GVSSSPTGTGSNGTPQQQQQQSANGNPTIITT) and 526 to 536 (SPSPTSSSSST). The interval 485–637 (GVSSSPTGTG…TSTNGSNTKI (153 aa)) is disordered. Residues 552-612 (LSSQNYDNFG…SHGSKLNDNI (61 aa)) show a composition bias toward polar residues. Residues 613–635 (NTNNNNSPSPTSSSTTSTNGSNT) are compositionally biased toward low complexity. 5 Kelch repeats span residues 655–700 (ITAR…YDNN), 702–745 (TIYR…VFDG), 748–793 (YIYL…YHPT), 796–842 (CIYV…FDGS), and 844–892 (YINI…SMNL). The segment covering 904-924 (NSFSSISSHSSLNSSSSNNGI) has biased composition (low complexity). Positions 904–936 (NSFSSISSHSSLNSSSSNNGISGSGGSGGDNEI) are disordered.

In Dictyostelium discoideum (Social amoeba), this protein is RING finger domain and kelch repeat-containing protein DDB_G0271372.